We begin with the raw amino-acid sequence, 337 residues long: Adenosine deaminase (337 aa).

Residues H12 and H14 each coordinate Zn(2+). The substrate site is built by H14, D16, and G170. Residue H197 coordinates Zn(2+). Residue E200 is the Proton donor of the active site. D278 is a binding site for Zn(2+). Position 279 (D279) interacts with substrate.

It belongs to the metallo-dependent hydrolases superfamily. Adenosine and AMP deaminases family. Adenosine deaminase subfamily. Zn(2+) serves as cofactor.

It catalyses the reaction adenosine + H2O + H(+) = inosine + NH4(+). It carries out the reaction 2'-deoxyadenosine + H2O + H(+) = 2'-deoxyinosine + NH4(+). In terms of biological role, catalyzes the hydrolytic deamination of adenosine and 2-deoxyadenosine. The sequence is that of Adenosine deaminase from Pectobacterium atrosepticum (strain SCRI 1043 / ATCC BAA-672) (Erwinia carotovora subsp. atroseptica).